Here is a 112-residue protein sequence, read N- to C-terminus: uncharacterized protein (112 aa).

The helical transmembrane segment at 82–104 threads the bilayer; that stretch reads IFFGFSIIASYFLKFHLLYVILL.

Its subcellular location is the membrane. This is an uncharacterized protein from Pasteurella multocida (strain Pm70).